A 381-amino-acid chain; its full sequence is ELMO domain-containing protein 3 (381 aa).

Residues 1–17 show a composition bias toward basic and acidic residues; that stretch reads MNENFHSFHEKELRDGQ. The interval 1 to 31 is disordered; the sequence is MNENFHSFHEKELRDGQVESVSAGSSPPCDK. The 155-residue stretch at 170 to 324 folds into the ELMO domain; the sequence is MHGRVLQTIY…DLEMSAKKSP (155 aa).

The protein resides in the cell projection. It is found in the stereocilium. It localises to the kinocilium. The protein localises to the cytoplasm. Its subcellular location is the cytoskeleton. Its function is as follows. Acts as a GTPase-activating protein (GAP) for ARL2 with low specific activity. The polypeptide is ELMO domain-containing protein 3 (ELMOD3) (Bos taurus (Bovine)).